The chain runs to 285 residues: Shikimate dehydrogenase (NADP(+)) (285 aa).

Residues 22-24 (SMS) and threonine 69 contribute to the shikimate site. Lysine 73 serves as the catalytic Proton acceptor. Aspartate 85 contacts NADP(+). Shikimate contacts are provided by asparagine 94 and aspartate 110. Residues 136–140 (GAGGA), 160–165 (NRTVAR), and methionine 225 contribute to the NADP(+) site. Residue tyrosine 227 participates in shikimate binding. Position 248 (glycine 248) interacts with NADP(+).

This sequence belongs to the shikimate dehydrogenase family. In terms of assembly, homodimer.

It carries out the reaction shikimate + NADP(+) = 3-dehydroshikimate + NADPH + H(+). It participates in metabolic intermediate biosynthesis; chorismate biosynthesis; chorismate from D-erythrose 4-phosphate and phosphoenolpyruvate: step 4/7. Involved in the biosynthesis of the chorismate, which leads to the biosynthesis of aromatic amino acids. Catalyzes the reversible NADPH linked reduction of 3-dehydroshikimate (DHSA) to yield shikimate (SA). This is Shikimate dehydrogenase (NADP(+)) from Caulobacter vibrioides (strain ATCC 19089 / CIP 103742 / CB 15) (Caulobacter crescentus).